The sequence spans 233 residues: Orotate phosphoribosyltransferase (233 aa).

Lys29 contributes to the 5-phospho-alpha-D-ribose 1-diphosphate binding site. 37-38 (FF) lines the orotate pocket. Residues 79–80 (YK), Arg109, Lys110, Lys113, His115, and 135–143 (DDVITAGTA) contribute to the 5-phospho-alpha-D-ribose 1-diphosphate site. Positions 139 and 167 each coordinate orotate.

This sequence belongs to the purine/pyrimidine phosphoribosyltransferase family. PyrE subfamily. Homodimer.

The catalysed reaction is orotidine 5'-phosphate + diphosphate = orotate + 5-phospho-alpha-D-ribose 1-diphosphate. It participates in pyrimidine metabolism; UMP biosynthesis via de novo pathway; UMP from orotate: step 1/2. Its function is as follows. Catalyzes the transfer of a ribosyl phosphate group from 5-phosphoribose 1-diphosphate to orotate, leading to the formation of orotidine monophosphate (OMP). The protein is Orotate phosphoribosyltransferase (ura-5) of Neurospora crassa (strain ATCC 24698 / 74-OR23-1A / CBS 708.71 / DSM 1257 / FGSC 987).